We begin with the raw amino-acid sequence, 151 residues long: Ribosomal RNA large subunit methyltransferase H (151 aa).

S-adenosyl-L-methionine-binding positions include G100 and 119–124 (LSKMTF).

It belongs to the RNA methyltransferase RlmH family. Homodimer.

It localises to the cytoplasm. It carries out the reaction pseudouridine(1915) in 23S rRNA + S-adenosyl-L-methionine = N(3)-methylpseudouridine(1915) in 23S rRNA + S-adenosyl-L-homocysteine + H(+). Its function is as follows. Specifically methylates the pseudouridine at position 1915 (m3Psi1915) in 23S rRNA. This chain is Ribosomal RNA large subunit methyltransferase H, found in Thermotoga maritima (strain ATCC 43589 / DSM 3109 / JCM 10099 / NBRC 100826 / MSB8).